The following is a 58-amino-acid chain: Photosystem II reaction center protein K (58 aa).

The propeptide occupies 1-21 (MFNAYLDTVLDLSANGTVILA). A helical transmembrane segment spans residues 29–49 (IFDPIVDVMPIIPVFFLLLAF).

It belongs to the PsbK family. PSII is composed of 1 copy each of membrane proteins PsbA, PsbB, PsbC, PsbD, PsbE, PsbF, PsbH, PsbI, PsbJ, PsbK, PsbL, PsbM, PsbT, PsbX, PsbY, PsbZ, Psb30/Ycf12, at least 3 peripheral proteins of the oxygen-evolving complex and a large number of cofactors. It forms dimeric complexes.

It is found in the plastid. The protein resides in the chloroplast thylakoid membrane. In terms of biological role, one of the components of the core complex of photosystem II (PSII). PSII is a light-driven water:plastoquinone oxidoreductase that uses light energy to abstract electrons from H(2)O, generating O(2) and a proton gradient subsequently used for ATP formation. It consists of a core antenna complex that captures photons, and an electron transfer chain that converts photonic excitation into a charge separation. This chain is Photosystem II reaction center protein K, found in Staurastrum punctulatum (Green alga).